The sequence spans 407 residues: Imidazolonepropionase (407 aa).

2 residues coordinate Fe(3+): His-74 and His-76. Residues His-74 and His-76 each coordinate Zn(2+). Arg-83, Tyr-146, and His-179 together coordinate 4-imidazolone-5-propanoate. Tyr-146 contacts N-formimidoyl-L-glutamate. Position 244 (His-244) interacts with Fe(3+). Residue His-244 participates in Zn(2+) binding. A 4-imidazolone-5-propanoate-binding site is contributed by Gln-247. Asp-319 is a Fe(3+) binding site. Asp-319 is a Zn(2+) binding site. 2 residues coordinate N-formimidoyl-L-glutamate: Asn-321 and Gly-323. Thr-324 is a 4-imidazolone-5-propanoate binding site.

It belongs to the metallo-dependent hydrolases superfamily. HutI family. Requires Zn(2+) as cofactor. The cofactor is Fe(3+).

It localises to the cytoplasm. It carries out the reaction 4-imidazolone-5-propanoate + H2O = N-formimidoyl-L-glutamate. It participates in amino-acid degradation; L-histidine degradation into L-glutamate; N-formimidoyl-L-glutamate from L-histidine: step 3/3. Catalyzes the hydrolytic cleavage of the carbon-nitrogen bond in imidazolone-5-propanoate to yield N-formimidoyl-L-glutamate. It is the third step in the universal histidine degradation pathway. This is Imidazolonepropionase from Salmonella enteritidis PT4 (strain P125109).